Reading from the N-terminus, the 148-residue chain is Large ribosomal subunit protein bL9 (148 aa).

It belongs to the bacterial ribosomal protein bL9 family.

In terms of biological role, binds to the 23S rRNA. In Chromohalobacter salexigens (strain ATCC BAA-138 / DSM 3043 / CIP 106854 / NCIMB 13768 / 1H11), this protein is Large ribosomal subunit protein bL9.